An 838-amino-acid polypeptide reads, in one-letter code: Calmodulin-binding transcription activator 6 (838 aa).

The segment at residues 25-134 is a DNA-binding region (CG-1); it reads VQTMLEEAKS…YRDTQEAATT (110 aa). An ANK repeat occupies 525–554; that stretch reads QGWTALHWAAYYGREKMVAALLSAGARPNL. IQ domains follow at residues 671–700, 713–742, and 788–817; these read SIIA…IQCR, MRRQ…SVGV, and LERS…THEE. The tract at residues 738-760 is calmodulin-binding; that stretch reads WSVGVLEKAVLRWRQKRKGFRGL. Residues 802–822 are a coiled coil; it reads KKAQQDYRRMKLTHEEAQVNH.

It belongs to the CAMTA family. In terms of tissue distribution, expressed in roots, stems, leaves, sepals, petals, stamen filaments, top of carpels, anthers and siliques, but not in stigmas.

The protein localises to the nucleus. Transcription activator that binds calmodulin in a calcium-dependent manner in vitro. Binds to the DNA consensus sequence 5'-[ACG]CGCG[GTC]-3'. Regulates transcriptional activity in response to calcium signals. The sequence is that of Calmodulin-binding transcription activator 6 from Arabidopsis thaliana (Mouse-ear cress).